The sequence spans 634 residues: 1-deoxy-D-xylulose-5-phosphate synthase (634 aa).

Residues histidine 73 and 114-116 each bind thiamine diphosphate; that span reads GHS. Position 145 (aspartate 145) interacts with Mg(2+). Thiamine diphosphate-binding positions include 146–147, asparagine 174, phenylalanine 285, and glutamate 367; that span reads GS. Asparagine 174 serves as a coordination point for Mg(2+).

This sequence belongs to the transketolase family. DXPS subfamily. Homodimer. Requires Mg(2+) as cofactor. It depends on thiamine diphosphate as a cofactor.

It carries out the reaction D-glyceraldehyde 3-phosphate + pyruvate + H(+) = 1-deoxy-D-xylulose 5-phosphate + CO2. Its pathway is metabolic intermediate biosynthesis; 1-deoxy-D-xylulose 5-phosphate biosynthesis; 1-deoxy-D-xylulose 5-phosphate from D-glyceraldehyde 3-phosphate and pyruvate: step 1/1. In terms of biological role, catalyzes the acyloin condensation reaction between C atoms 2 and 3 of pyruvate and glyceraldehyde 3-phosphate to yield 1-deoxy-D-xylulose-5-phosphate (DXP). The protein is 1-deoxy-D-xylulose-5-phosphate synthase of Syntrophotalea carbinolica (strain DSM 2380 / NBRC 103641 / GraBd1) (Pelobacter carbinolicus).